The chain runs to 240 residues: Probable transcriptional regulatory protein MS53_0373 (240 aa).

The protein belongs to the TACO1 family.

The protein resides in the cytoplasm. The sequence is that of Probable transcriptional regulatory protein MS53_0373 from Mycoplasmopsis synoviae (strain 53) (Mycoplasma synoviae).